The following is a 366-amino-acid chain: HTH-type transcriptional regulator MSMEG_6044/MSMEI_5883 (366 aa).

Positions 11 to 66 (ATLASLAAELKVSRTTISNAYNRPDQLSADLRERIFDAAKRLGYPGPDPVARSLRT) constitute an HTH lacI-type domain. The segment at residues 13-32 (LASLAAELKVSRTTISNAYN) is a DNA-binding region (H-T-H motif).

In terms of biological role, transcriptional regulator that negatively regulates transcription of the mce4 operon, which is involved in cholesterol transport and utilization. Acts by binding to the promoter region of the mce4 operon. The chain is HTH-type transcriptional regulator MSMEG_6044/MSMEI_5883 from Mycolicibacterium smegmatis (strain ATCC 700084 / mc(2)155) (Mycobacterium smegmatis).